We begin with the raw amino-acid sequence, 267 residues long: L-aspartate dehydrogenase (267 aa).

NAD(+) contacts are provided by Ala-124 and Asn-190. Residue His-220 is part of the active site.

It belongs to the L-aspartate dehydrogenase family.

The catalysed reaction is L-aspartate + NADP(+) + H2O = oxaloacetate + NH4(+) + NADPH + H(+). The enzyme catalyses L-aspartate + NAD(+) + H2O = oxaloacetate + NH4(+) + NADH + H(+). The protein operates within cofactor biosynthesis; NAD(+) biosynthesis; iminoaspartate from L-aspartate (dehydrogenase route): step 1/1. Functionally, specifically catalyzes the NAD or NADP-dependent dehydrogenation of L-aspartate to iminoaspartate. This chain is L-aspartate dehydrogenase, found in Polaromonas sp. (strain JS666 / ATCC BAA-500).